The following is a 313-amino-acid chain: uncharacterized protein (313 aa).

The next 2 membrane-spanning stretches (helical) occupy residues 42-64 (LVVL…LFLT) and 74-96 (VRAY…TLYV).

Its subcellular location is the cell membrane. This is an uncharacterized protein from Treponema pallidum (strain Nichols).